The primary structure comprises 118 residues: Evasin P1080 (118 aa).

Positions 1-19 (FFQLAVFVVILFNINLLSA) are cleaved as a signal peptide. 3 disulfide bridges follow: Cys41–Cys60, Cys45–Cys62, and Cys56–Cys73. Asn44 carries N-linked (GlcNAc...) asparagine glycosylation. N-linked (GlcNAc...) asparagine glycosylation is found at Asn67 and Asn104.

Its subcellular location is the secreted. Its function is as follows. Salivary chemokine-binding protein which binds to host chemokines CXCL1, CXCL2, CXCL3, CXCL4, CXCL5, CXCL6, CXCL10, CXCL11 and CXCL13. The polypeptide is Evasin P1080 (Ixodes ricinus (Common tick)).